A 492-amino-acid polypeptide reads, in one-letter code: Trigger factor (492 aa).

The PPIase FKBP-type domain maps to 169 to 254 (GDRVSIDYVG…VKEVSKPGEL (86 aa)). Residues 441–492 (LMADDEDAETTTKAKPAKKAAAKKAEAKANEDEAEEPKKKAAPKKKAAKDAE) are disordered. The segment covering 463 to 479 (KKAEAKANEDEAEEPKK) has biased composition (basic and acidic residues). Basic residues predominate over residues 480-492 (KAAPKKKAAKDAE).

The protein belongs to the FKBP-type PPIase family. Tig subfamily.

The protein localises to the cytoplasm. It catalyses the reaction [protein]-peptidylproline (omega=180) = [protein]-peptidylproline (omega=0). In terms of biological role, involved in protein export. Acts as a chaperone by maintaining the newly synthesized protein in an open conformation. Functions as a peptidyl-prolyl cis-trans isomerase. The protein is Trigger factor of Mesorhizobium japonicum (strain LMG 29417 / CECT 9101 / MAFF 303099) (Mesorhizobium loti (strain MAFF 303099)).